Consider the following 494-residue polypeptide: MTAAATANVVTLPASEPAKAVRDTRPLRLITCGSVDDGKSTLIGRLLWDTKAVKEDQAATLQRDSTGKQNDLGLPDFALLLDGLQAEREQGITIDVAYRYFSTDKRSFIVADTPGHEQYTRNMATGASTADLAVLLVDARMGILEQTRRHATIASLLGIKQFVLAINKIDLTNYDRAGFEKISHDFREFALSLGVKQITAIPMSALKGENVVYSGQAAMPWYTGPTLVETLELATVRSAQAVGFRLSVQRVSRPGESFRGYQGTVAGGSVKPGDSVMILPSGMVANVSKIVTFDLVRNAAVAGDAITLVLDRQVDVSRGDMIVAIDSQPQSGLSFDAQIVALQPEGIEPGKRYWLKSGSRRQRVQVQPIAQLELKTGAWAPAQSLWMNAIGKVRLSFDEAAVFDPYDQNRSTGSFILIDPESNNTVAGGMITGKRADLGGIHKDGQRVLLSLPADLADQIMASELFSSRRDETEVRRVTAAQAAEIWANAASDI.

The tr-type G domain occupies 24-240 (TRPLRLITCG…LELATVRSAQ (217 aa)). The segment at 33–40 (GSVDDGKS) is G1. 33–40 (GSVDDGKS) serves as a coordination point for GTP. Residues 91 to 95 (GITID) are G2. Residues 112-115 (DTPG) form a G3 region. GTP is bound by residues 112-116 (DTPGH) and 167-170 (NKID). The segment at 167–170 (NKID) is G4. The tract at residues 204–206 (SAL) is G5.

The protein belongs to the TRAFAC class translation factor GTPase superfamily. Classic translation factor GTPase family. CysN/NodQ subfamily. As to quaternary structure, heterodimer composed of CysD, the smaller subunit, and CysN.

The catalysed reaction is sulfate + ATP + H(+) = adenosine 5'-phosphosulfate + diphosphate. The protein operates within sulfur metabolism; hydrogen sulfide biosynthesis; sulfite from sulfate: step 1/3. With CysD forms the ATP sulfurylase (ATPS) that catalyzes the adenylation of sulfate producing adenosine 5'-phosphosulfate (APS) and diphosphate, the first enzymatic step in sulfur assimilation pathway. APS synthesis involves the formation of a high-energy phosphoric-sulfuric acid anhydride bond driven by GTP hydrolysis by CysN coupled to ATP hydrolysis by CysD. The chain is Sulfate adenylyltransferase subunit 1 from Rhizobium tropici.